The chain runs to 297 residues: Transmembrane protein 178A (297 aa).

The signal sequence occupies residues methionine 1–alanine 25. Topologically, residues isoleucine 26 to glycine 179 are extracellular. Positions glutamate 41–asparagine 57 are enriched in basic and acidic residues. A disordered region spans residues glutamate 41 to arginine 84. Residues arginine 68–proline 79 are compositionally biased toward low complexity. N-linked (GlcNAc...) asparagine glycosylation occurs at asparagine 158. The chain crosses the membrane as a helical span at residues phenylalanine 180–phenylalanine 200. The Cytoplasmic portion of the chain corresponds to tryptophan 201–histidine 208. Residues valine 209–alanine 229 traverse the membrane as a helical segment. The Extracellular segment spans residues alanine 230–serine 257. The chain crosses the membrane as a helical span at residues isoleucine 258 to tyrosine 278. The Cytoplasmic segment spans residues proline 279–valine 297.

Belongs to the TMEM178 family. As to quaternary structure, interacts with STIM1.

The protein resides in the endoplasmic reticulum membrane. Acts as a negative regulator of osteoclast differentiation in basal and inflammatory conditions by regulating TNFSF11-induced Ca (2+) fluxes, thereby controlling the induction of NFATC1. The polypeptide is Transmembrane protein 178A (TMEM178A) (Homo sapiens (Human)).